A 209-amino-acid polypeptide reads, in one-letter code: Thymidine kinase (209 aa).

ATP contacts are provided by residues 9-16 (SAMNAGKT) and 88-91 (DEAQ). The active-site Proton acceptor is E89.

The protein belongs to the thymidine kinase family. In terms of assembly, homotetramer.

The protein localises to the cytoplasm. The enzyme catalyses thymidine + ATP = dTMP + ADP + H(+). The sequence is that of Thymidine kinase from Xanthomonas oryzae pv. oryzae (strain MAFF 311018).